A 295-amino-acid polypeptide reads, in one-letter code: Septu protein PtuB (295 aa).

Component of antiviral defense system Septu type II, composed of PtuA and PtuB. Expression of Septu type II in B.subtilis (strain BEST7003) confers resistance to phages SBSphiC and SpBeta. May be a nuclease. This Bacillus mycoides (strain KBAB4) (Bacillus weihenstephanensis) protein is Septu protein PtuB.